The following is a 582-amino-acid chain: Beta-glucosidase 28 (582 aa).

The N-terminal stretch at 1-21 is a signal peptide; the sequence is MKMHFFILLVITSWLSEKITS. Residues Q48, H151, and 196-197 each bind a beta-D-glucoside; that span reads NE. E197 (proton donor) is an active-site residue. A disulfide bridge connects residues C216 and C224. N255 and N330 each carry an N-linked (GlcNAc...) asparagine glycan. A beta-D-glucoside is bound at residue Y340. An N-linked (GlcNAc...) asparagine glycan is attached at N370. Position 412 (E412) interacts with a beta-D-glucoside. E412 (nucleophile) is an active-site residue. A glycan (N-linked (GlcNAc...) asparagine) is linked at N430. A beta-D-glucoside-binding positions include W462, 469–470, and F478; that span reads EW. 2 N-linked (GlcNAc...) asparagine glycosylation sites follow: N521 and N544.

Belongs to the glycosyl hydrolase 1 family.

It catalyses the reaction Hydrolysis of terminal, non-reducing beta-D-glucosyl residues with release of beta-D-glucose.. This Arabidopsis thaliana (Mouse-ear cress) protein is Beta-glucosidase 28.